Consider the following 252-residue polypeptide: Flap endonuclease Xni (252 aa).

Mg(2+) is bound at residue Asp105. Residues 162–251 (EQYQFLDFIA…EINLKQFRVK (90 aa)) form the 5'-3' exonuclease domain. Positions 172, 173, 181, 183, and 186 each coordinate K(+). The tract at residues 185-190 (GIGPKS) is interaction with DNA.

The protein belongs to the Xni family. Mg(2+) serves as cofactor. K(+) is required as a cofactor.

In terms of biological role, has flap endonuclease activity. During DNA replication, flap endonucleases cleave the 5'-overhanging flap structure that is generated by displacement synthesis when DNA polymerase encounters the 5'-end of a downstream Okazaki fragment. This chain is Flap endonuclease Xni, found in Shewanella denitrificans (strain OS217 / ATCC BAA-1090 / DSM 15013).